Here is a 349-residue protein sequence, read N- to C-terminus: ATPase GET3 (349 aa).

Residue 27-34 (KGGVGKTT) coordinates ATP. Residue Asp58 is part of the active site. The ATP site is built by Glu240 and Asn267. The Zn(2+) site is built by Cys280 and Cys283.

This sequence belongs to the arsA ATPase family. Homodimer. Component of the Golgi to ER traffic (GET) complex, which is composed of GET1, GET2 and GET3. Within the complex, GET1 and GET2 form a heterotetramer which is stabilized by phosphatidylinositol binding and which binds to the GET3 homodimer. Interacts with the chloride channel protein GEF1.

It is found in the cytoplasm. It localises to the endoplasmic reticulum. Its subcellular location is the golgi apparatus. Its function is as follows. ATPase required for the post-translational delivery of tail-anchored (TA) proteins to the endoplasmic reticulum. Recognizes and selectively binds the transmembrane domain of TA proteins in the cytosol. This complex then targets to the endoplasmic reticulum by membrane-bound receptors GET1 and GET2, where the tail-anchored protein is released for insertion. This process is regulated by ATP binding and hydrolysis. ATP binding drives the homodimer towards the closed dimer state, facilitating recognition of newly synthesized TA membrane proteins. ATP hydrolysis is required for insertion. Subsequently, the homodimer reverts towards the open dimer state, lowering its affinity for the GET1-GET2 receptor, and returning it to the cytosol to initiate a new round of targeting. Cooperates with the HDEL receptor ERD2 to mediate the ATP-dependent retrieval of resident ER proteins that contain a C-terminal H-D-E-L retention signal from the Golgi to the ER. Involved in low-level resistance to the oxyanions arsenite and arsenate, and in heat tolerance. The sequence is that of ATPase GET3 from Eremothecium gossypii (strain ATCC 10895 / CBS 109.51 / FGSC 9923 / NRRL Y-1056) (Yeast).